A 136-amino-acid chain; its full sequence is Ribosome-binding factor A (136 aa).

It belongs to the RbfA family. As to quaternary structure, monomer. Binds 30S ribosomal subunits, but not 50S ribosomal subunits or 70S ribosomes.

Its subcellular location is the cytoplasm. One of several proteins that assist in the late maturation steps of the functional core of the 30S ribosomal subunit. Associates with free 30S ribosomal subunits (but not with 30S subunits that are part of 70S ribosomes or polysomes). Required for efficient processing of 16S rRNA. May interact with the 5'-terminal helix region of 16S rRNA. The protein is Ribosome-binding factor A of Rhodopseudomonas palustris (strain BisB5).